Here is a 572-residue protein sequence, read N- to C-terminus: Sorting nexin 2B (572 aa).

2 disordered regions span residues 1–97 (MMGS…SSYL) and 114–136 (SEIN…SPSS). Positions 9–30 (ESHLHSSKEEMEKLFLREDGDP) are enriched in basic and acidic residues. The span at 32 to 53 (TKSNVNGDKSNSNYRSAMSTLF) shows a compositional bias: polar residues. The segment covering 124–136 (SQSSDSLSRSPSS) has biased composition (low complexity). Ser133 is subject to Phosphoserine. A PX domain is found at 147-266 (SNPQKEQEAT…KVFLQAQGKL (120 aa)). Residues Arg190, Lys216, and Arg233 each coordinate a 1,2-diacyl-sn-glycero-3-phospho-(1D-myo-inositol-3-phosphate). The region spanning 318–572 (LRQSVSNDWG…ETRQYDRESS (255 aa)) is the BAR domain.

It belongs to the sorting nexin family. Homodimer. Heterodimer with SNX1 or SNX2B. Component of the retromer complex which consists of VPS29 (MAG1), VPS26 (VPS26A or VPS26B), VPS35 (VPS35A or VPS35B or VPS35C), VPS5/17 (SNX1 or SNX2A or SNX2B). As to expression, ubiquitously expressed.

The protein resides in the cytoplasm. Its subcellular location is the endosome membrane. It is found in the prevacuolar compartment membrane. It localises to the golgi apparatus. The protein localises to the trans-Golgi network membrane. Its function is as follows. Plays a role in vesicular protein sorting. Acts at the crossroads between the secretory and endocytic pathways. Is involved in the endosome to vacuole protein transport and, as component of the membrane-associated retromer complex, is also involved in endosome-to-Golgi retrograde transport. The sequence is that of Sorting nexin 2B (SNX2B) from Arabidopsis thaliana (Mouse-ear cress).